The sequence spans 589 residues: MDRRNGGDPLAPPRPPKLLPRVHRPRAPEPTLSGVDHNAGATASALASGASSAAPVAIHNNNSQQQLSISAAASNNNTISIIPASPDFDDYQIHHLTFLPQRPSSLSRNSSTASSTTATGISVSGSGSVSGSSSSFTRRRPPAPVPLNNSISNNNNNSINNNFLSHFQSAEPASNALGQPPASPVTLAQPRPESERLTNEYVDTPLQHATRSQHPAGQQDNGQTTTHHLLLLPQRNQHLHLQQHQQHLQQQQQQQQQQQQQQHLQHQQNQQHARLATTTQATSVGSDHTDGLLHSHLQNSTTKPPASKQPAPPRLGMGLGLGLGLGLNQPIITKQPTPATQKERMHALEELLQPGGAGGNGGPLVMAGDPSLLNPIVCPRCGRCRCEQCQSPRPLPQTWVCNKTCLCSAESVIDYASCLCCAKALFYHCARDNDLDCDDGNGTPCVDNPCSCGPYKRTQRWGWLGALSIFLPCLWFYWPMRGCMKLCEKCYGRFAGRGCRCQGIGGGGAGSGGGVGSIGSTSSMLPIVPLGVNGSGLGGGVSLSGGVTDGGLNQANGKAMDHGCSAARSILRKGDLTPEKRLLDSSPDY.

Disordered stretches follow at residues 1 to 37 (MDRR…GVDH), 102 to 194 (RPSS…RPES), and 239 to 320 (LHLQ…MGLG). Composition is skewed to low complexity over residues 104–135 (SSLS…SSSS) and 148–162 (NNSI…INNN). Positions 163–172 (FLSHFQSAEP) are enriched in polar residues. Residues 239–272 (LHLQQHQQHLQQQQQQQQQQQQQQHLQHQQNQQH) are compositionally biased toward low complexity. Residues 276 to 286 (ATTTQATSVGS) show a composition bias toward polar residues. One can recognise an SPR domain in the interval 380–499 (RCGRCRCEQC…CYGRFAGRGC (120 aa)).

This sequence belongs to the sprouty family. As to quaternary structure, interacts with DRK and RasGAP1 proteins of the Ras pathway. As to expression, in ovary, expressed from stage 7 of oogenesis in the posterior follicle cells and during stage 9 when the follicle cells migrate posteriorly over the oocyte nucleus, expression is seen in the dorsal and lateral cells and is excluded from the ventral cells. Once the migration of follicle cells is complete expressed in the dorsal-anterior corner of the egg chamber. Expressed in the embryonic tracheal system, developing eye imaginal disk, embryonic chordotonal organ precursors, midline glia and wing imaginal disk.

The protein resides in the cell membrane. Inhibitor of tracheal branching that restricts branch budding by antagonizing the BNL-FGF pathway (BNL: branchless, an fgf inducer of branching). Acts as an antagonist of EGFR-mediated signaling in the eye (where it is important for cell determination) midline glia, chordotonal organs, wing and ovarian follicle cells. The polypeptide is Protein sprouty (sty) (Drosophila melanogaster (Fruit fly)).